The following is a 139-amino-acid chain: Putative esterase PM0788 (139 aa).

The protein belongs to the thioesterase PaaI family.

The sequence is that of Putative esterase PM0788 from Pasteurella multocida (strain Pm70).